The following is a 263-amino-acid chain: Leucyl/phenylalanyl-tRNA--protein transferase (263 aa).

It belongs to the L/F-transferase family.

It is found in the cytoplasm. It carries out the reaction N-terminal L-lysyl-[protein] + L-leucyl-tRNA(Leu) = N-terminal L-leucyl-L-lysyl-[protein] + tRNA(Leu) + H(+). The enzyme catalyses N-terminal L-arginyl-[protein] + L-leucyl-tRNA(Leu) = N-terminal L-leucyl-L-arginyl-[protein] + tRNA(Leu) + H(+). It catalyses the reaction L-phenylalanyl-tRNA(Phe) + an N-terminal L-alpha-aminoacyl-[protein] = an N-terminal L-phenylalanyl-L-alpha-aminoacyl-[protein] + tRNA(Phe). Its function is as follows. Functions in the N-end rule pathway of protein degradation where it conjugates Leu, Phe and, less efficiently, Met from aminoacyl-tRNAs to the N-termini of proteins containing an N-terminal arginine or lysine. The sequence is that of Leucyl/phenylalanyl-tRNA--protein transferase from Novosphingobium aromaticivorans (strain ATCC 700278 / DSM 12444 / CCUG 56034 / CIP 105152 / NBRC 16084 / F199).